The following is a 550-amino-acid chain: Hydroxylamine reductase (550 aa).

Positions 7, 10, 19, and 25 each coordinate [4Fe-4S] cluster. Hybrid [4Fe-2O-2S] cluster-binding residues include H244, E268, C312, C405, C433, C458, E493, and K495. The residue at position 405 (C405) is a Cysteine persulfide.

The protein belongs to the HCP family. [4Fe-4S] cluster serves as cofactor. It depends on hybrid [4Fe-2O-2S] cluster as a cofactor.

The protein resides in the cytoplasm. It catalyses the reaction A + NH4(+) + H2O = hydroxylamine + AH2 + H(+). Its function is as follows. Catalyzes the reduction of hydroxylamine to form NH(3) and H(2)O. This Porphyromonas gingivalis (strain ATCC 33277 / DSM 20709 / CIP 103683 / JCM 12257 / NCTC 11834 / 2561) protein is Hydroxylamine reductase.